The chain runs to 384 residues: G protein-coupled receptor 88 (384 aa).

At M1–S35 the chain is on the extracellular side. A glycan (N-linked (GlcNAc...) asparagine) is linked at N3. A helical membrane pass occupies residues L36–V56. The Cytoplasmic portion of the chain corresponds to S57–G73. A helical membrane pass occupies residues C74–L94. The Extracellular segment spans residues P95–R116. The chain crosses the membrane as a helical span at residues G117–L136. Residues N137 to T158 lie on the Cytoplasmic side of the membrane. Residues V159–W179 traverse the membrane as a helical segment. At A180–L195 the chain is on the extracellular side. Residues L196–V216 form a helical membrane-spanning segment. Topologically, residues R217–S285 are cytoplasmic. A helical transmembrane segment spans residues V286–A306. The Extracellular portion of the chain corresponds to S307–S310. The chain crosses the membrane as a helical span at residues L311–L331. At N332 to W384 the chain is on the cytoplasmic side.

It belongs to the G-protein coupled receptor 1 family. Expressed predominantly in the striatum.

The protein resides in the cell membrane. It localises to the cell projection. It is found in the cilium membrane. Its subcellular location is the cytoplasm. The protein localises to the nucleus. Its function is as follows. Orphan G protein-coupled receptor implicated in a large repertoire of behavioral responses that engage motor activities, spatial learning, and emotional processing. May play a role in the regulation of cognitive and motor function. Couples with the heterotrimeric G protein complex of the G(i) subfamily, consisting of GNAI1, GNB1 and GNG2, thereby acting through a G(i)-mediated pathway. Plays a role in the attenuation of D1 dopamine receptor (D1R)-mediated cAMP response in ciliated cells. In on-ciliated cells, involved in the inhibition of the beta-2 adrenergic receptor (B2AR) response. This chain is G protein-coupled receptor 88 (Gpr88), found in Mus musculus (Mouse).